The chain runs to 173 residues: Crossover junction endodeoxyribonuclease RuvC (173 aa).

Catalysis depends on residues Asp8, Glu67, and Asp139. The Mg(2+) site is built by Asp8, Glu67, and Asp139.

Belongs to the RuvC family. As to quaternary structure, homodimer which binds Holliday junction (HJ) DNA. The HJ becomes 2-fold symmetrical on binding to RuvC with unstacked arms; it has a different conformation from HJ DNA in complex with RuvA. In the full resolvosome a probable DNA-RuvA(4)-RuvB(12)-RuvC(2) complex forms which resolves the HJ. The cofactor is Mg(2+).

The protein resides in the cytoplasm. It carries out the reaction Endonucleolytic cleavage at a junction such as a reciprocal single-stranded crossover between two homologous DNA duplexes (Holliday junction).. In terms of biological role, the RuvA-RuvB-RuvC complex processes Holliday junction (HJ) DNA during genetic recombination and DNA repair. Endonuclease that resolves HJ intermediates. Cleaves cruciform DNA by making single-stranded nicks across the HJ at symmetrical positions within the homologous arms, yielding a 5'-phosphate and a 3'-hydroxyl group; requires a central core of homology in the junction. The consensus cleavage sequence is 5'-(A/T)TT(C/G)-3'. Cleavage occurs on the 3'-side of the TT dinucleotide at the point of strand exchange. HJ branch migration catalyzed by RuvA-RuvB allows RuvC to scan DNA until it finds its consensus sequence, where it cleaves and resolves the cruciform DNA. The protein is Crossover junction endodeoxyribonuclease RuvC of Baumannia cicadellinicola subsp. Homalodisca coagulata.